The following is a 74-amino-acid chain: Tetrahydromethanopterin S-methyltransferase subunit G (74 aa).

The chain crosses the membrane as a helical span at residues 50–70 (IGILYGLVIGLYLCMLYILLG).

Belongs to the MtrG family. In terms of assembly, the complex is composed of 8 subunits; MtrA, MtrB, MtrC, MtrD, MtrE, MtrF, MtrG and MtrH.

The protein localises to the cell membrane. It carries out the reaction 5-methyl-5,6,7,8-tetrahydromethanopterin + coenzyme M + 2 Na(+)(in) = 5,6,7,8-tetrahydromethanopterin + methyl-coenzyme M + 2 Na(+)(out). It functions in the pathway one-carbon metabolism; methanogenesis from CO(2); methyl-coenzyme M from 5,10-methylene-5,6,7,8-tetrahydromethanopterin: step 2/2. Its function is as follows. Part of a complex that catalyzes the formation of methyl-coenzyme M and tetrahydromethanopterin from coenzyme M and methyl-tetrahydromethanopterin. This is an energy-conserving, sodium-ion translocating step. The chain is Tetrahydromethanopterin S-methyltransferase subunit G from Methanopyrus kandleri (strain AV19 / DSM 6324 / JCM 9639 / NBRC 100938).